A 483-amino-acid chain; its full sequence is Probable cobyric acid synthase (483 aa).

In terms of domain architecture, GATase cobBQ-type spans 247-433; the sequence is ELHIQIIKLP…LHGIFHNFAF (187 aa). C325 functions as the Nucleophile in the catalytic mechanism. H425 is a catalytic residue.

Belongs to the CobB/CobQ family. CobQ subfamily.

It functions in the pathway cofactor biosynthesis; adenosylcobalamin biosynthesis. Its function is as follows. Catalyzes amidations at positions B, D, E, and G on adenosylcobyrinic A,C-diamide. NH(2) groups are provided by glutamine, and one molecule of ATP is hydrogenolyzed for each amidation. The polypeptide is Probable cobyric acid synthase (Thermococcus gammatolerans (strain DSM 15229 / JCM 11827 / EJ3)).